The sequence spans 48 residues: MRKKIIFVCQDCLSRNYVMSWSKQVLNRLIINKYCKHCNQKTKHLDSF.

It belongs to the bacterial ribosomal protein bL33 family.

This chain is Large ribosomal subunit protein bL33B (rpmG2), found in Mycoplasma pneumoniae (strain ATCC 29342 / M129 / Subtype 1) (Mycoplasmoides pneumoniae).